Consider the following 553-residue polypeptide: Dihydroxy-acid dehydratase (553 aa).

Asp-78 is a Mg(2+) binding site. Position 119 (Cys-119) interacts with [2Fe-2S] cluster. The Mg(2+) site is built by Asp-120 and Lys-121. Lys-121 is subject to N6-carboxylysine. A [2Fe-2S] cluster-binding site is contributed by Cys-193. Glu-441 is a binding site for Mg(2+). Ser-467 acts as the Proton acceptor in catalysis.

This sequence belongs to the IlvD/Edd family. In terms of assembly, homodimer. It depends on [2Fe-2S] cluster as a cofactor. The cofactor is Mg(2+).

The enzyme catalyses (2R)-2,3-dihydroxy-3-methylbutanoate = 3-methyl-2-oxobutanoate + H2O. The catalysed reaction is (2R,3R)-2,3-dihydroxy-3-methylpentanoate = (S)-3-methyl-2-oxopentanoate + H2O. Its pathway is amino-acid biosynthesis; L-isoleucine biosynthesis; L-isoleucine from 2-oxobutanoate: step 3/4. The protein operates within amino-acid biosynthesis; L-valine biosynthesis; L-valine from pyruvate: step 3/4. In terms of biological role, functions in the biosynthesis of branched-chain amino acids. Catalyzes the dehydration of (2R,3R)-2,3-dihydroxy-3-methylpentanoate (2,3-dihydroxy-3-methylvalerate) into 2-oxo-3-methylpentanoate (2-oxo-3-methylvalerate) and of (2R)-2,3-dihydroxy-3-methylbutanoate (2,3-dihydroxyisovalerate) into 2-oxo-3-methylbutanoate (2-oxoisovalerate), the penultimate precursor to L-isoleucine and L-valine, respectively. In Pelobacter propionicus (strain DSM 2379 / NBRC 103807 / OttBd1), this protein is Dihydroxy-acid dehydratase.